We begin with the raw amino-acid sequence, 267 residues long: Translation initiation factor 2 subunit alpha (267 aa).

The 72-residue stretch at 12–83 folds into the S1 motif domain; the sequence is GEYVIATVKE…RRKTVDVSLK (72 aa).

Belongs to the eIF-2-alpha family. In terms of assembly, heterotrimer composed of an alpha, a beta and a gamma chain.

Its function is as follows. eIF-2 functions in the early steps of protein synthesis by forming a ternary complex with GTP and initiator tRNA. This is Translation initiation factor 2 subunit alpha from Staphylothermus marinus (strain ATCC 43588 / DSM 3639 / JCM 9404 / F1).